A 325-amino-acid chain; its full sequence is MKNPKMTVIGGGTGISIILKSLRNEAVDITAVVTVADDGGSSGELRNAMQLAPPGDLRNVLLAMSDMPKFYERVFQYRFNESDGALAGHPLGNLIIAGISEMQGSTYNAIQILTKFFHITGKIYPSSEQALTLHAVFKDGHEVAGESSIAKYQGMIDHVYVTNTYNDQKPQASRKVVEAILESDMIVLGPGSLFTSILPNLVIPEIKEALRQTKAEVVYICNIMTQYGETEQFSDADHVAVLNQHLGRDLIDTVLVNVAKVPQAYMNSNKFDEYLVQVDHDFAGLCRAAKRVISSYFLRLENGGAFHDGNLVVEELMNLVRIVKQ.

The protein belongs to the gluconeogenesis factor family.

Its subcellular location is the cytoplasm. Its function is as follows. Required for morphogenesis under gluconeogenic growth conditions. The sequence is that of Putative gluconeogenesis factor from Streptococcus pyogenes serotype M3 (strain ATCC BAA-595 / MGAS315).